A 250-amino-acid polypeptide reads, in one-letter code: Triosephosphate isomerase (250 aa).

Substrate is bound at residue 9–11 (NWK). Catalysis depends on histidine 96, which acts as the Electrophile. Glutamate 168 functions as the Proton acceptor in the catalytic mechanism. Substrate is bound by residues glycine 174, serine 216, and 237–238 (GG).

Belongs to the triosephosphate isomerase family. As to quaternary structure, homodimer.

The protein resides in the cytoplasm. It carries out the reaction D-glyceraldehyde 3-phosphate = dihydroxyacetone phosphate. It participates in carbohydrate biosynthesis; gluconeogenesis. Its pathway is carbohydrate degradation; glycolysis; D-glyceraldehyde 3-phosphate from glycerone phosphate: step 1/1. Functionally, involved in the gluconeogenesis. Catalyzes stereospecifically the conversion of dihydroxyacetone phosphate (DHAP) to D-glyceraldehyde-3-phosphate (G3P). The polypeptide is Triosephosphate isomerase (Leptospira borgpetersenii serovar Hardjo-bovis (strain JB197)).